Reading from the N-terminus, the 165-residue chain is UPF0303 protein Bcenmc03_1534 (165 aa).

Belongs to the UPF0303 family.

The protein is UPF0303 protein Bcenmc03_1534 of Burkholderia orbicola (strain MC0-3).